The sequence spans 824 residues: Leucine--tRNA ligase (824 aa).

Positions 42–52 (PYPSGKIHMGH) match the 'HIGH' region motif. A 'KMSKS' region motif is present at residues 581 to 585 (KMSKS). K584 serves as a coordination point for ATP.

Belongs to the class-I aminoacyl-tRNA synthetase family.

The protein resides in the cytoplasm. The catalysed reaction is tRNA(Leu) + L-leucine + ATP = L-leucyl-tRNA(Leu) + AMP + diphosphate. The chain is Leucine--tRNA ligase from Geobacter sp. (strain M21).